A 232-amino-acid chain; its full sequence is Large ribosomal subunit protein uL1 (232 aa).

This sequence belongs to the universal ribosomal protein uL1 family. In terms of assembly, part of the 50S ribosomal subunit.

Its function is as follows. Binds directly to 23S rRNA. The L1 stalk is quite mobile in the ribosome, and is involved in E site tRNA release. Functionally, protein L1 is also a translational repressor protein, it controls the translation of the L11 operon by binding to its mRNA. This Xanthomonas oryzae pv. oryzae (strain MAFF 311018) protein is Large ribosomal subunit protein uL1.